Reading from the N-terminus, the 351-residue chain is Photosystem II D2 protein (351 aa).

The helical transmembrane segment at Cys39 to Thr59 threads the bilayer. His116 contributes to the chlorophyll a binding site. The chain crosses the membrane as a helical span at residues Gly123 to Pro139. Pheophytin a is bound by residues Gln128 and Asn141. Residues Val151 to Ala164 traverse the membrane as a helical segment. His196 provides a ligand contact to chlorophyll a. A helical transmembrane segment spans residues Gly206–Glu226. Residues His213 and Phe260 each coordinate a plastoquinone. His213 lines the Fe cation pocket. His267 contributes to the Fe cation binding site. Residues Gly277–Arg293 traverse the membrane as a helical segment.

This sequence belongs to the reaction center PufL/M/PsbA/D family. PSII is composed of 1 copy each of membrane proteins PsbA, PsbB, PsbC, PsbD, PsbE, PsbF, PsbH, PsbI, PsbJ, PsbK, PsbL, PsbM, PsbT, PsbY, PsbZ, Psb30/Ycf12, at least 3 peripheral proteins of the oxygen-evolving complex and a large number of cofactors. It forms dimeric complexes. The D1/D2 heterodimer binds P680, chlorophylls that are the primary electron donor of PSII, and subsequent electron acceptors. It shares a non-heme iron and each subunit binds pheophytin, quinone, additional chlorophylls, carotenoids and lipids. There is also a Cl(-1) ion associated with D1 and D2, which is required for oxygen evolution. The PSII complex binds additional chlorophylls, carotenoids and specific lipids. serves as cofactor.

Its subcellular location is the plastid. It localises to the chloroplast thylakoid membrane. The catalysed reaction is 2 a plastoquinone + 4 hnu + 2 H2O = 2 a plastoquinol + O2. Functionally, photosystem II (PSII) is a light-driven water:plastoquinone oxidoreductase that uses light energy to abstract electrons from H(2)O, generating O(2) and a proton gradient subsequently used for ATP formation. It consists of a core antenna complex that captures photons, and an electron transfer chain that converts photonic excitation into a charge separation. The D1/D2 (PsbA/PsbD) reaction center heterodimer binds P680, the primary electron donor of PSII as well as several subsequent electron acceptors. D2 is needed for assembly of a stable PSII complex. This is Photosystem II D2 protein from Galdieria sulphuraria (Red alga).